The following is a 507-amino-acid chain: Eukaryotic translation initiation factor 4E-binding protein Mextli homolog (507 aa).

The disordered stretch occupies residues 126–163; that stretch reads RPEGQHDPAPTVGIPPSATSPPTQVTSSVTSPVPSSPQ. Residues 140–158 are compositionally biased toward low complexity; it reads PPSATSPPTQVTSSVTSPV. Residues 242 to 307 enclose the KH domain; it reads QLRHEMIIRN…EDIERAKDMI (66 aa). 2 disordered regions span residues 314 to 360 and 395 to 424; these read NMSP…DEDI and ARPSAEEREKKKERRKSMPLQQTARDQQEP. The span at 329 to 348 shows a compositional bias: polar residues; sequence QYSGMSSENQSIPSQQNTAN. Residues 349 to 360 are compositionally biased toward acidic residues; that stretch reads IDEDDDDDDEDI.

In terms of assembly, interacts with eukaryotic translation initiation factor ife-3.

It localises to the cytoplasm. Its function is as follows. Plays a role in promoting translation. The sequence is that of Eukaryotic translation initiation factor 4E-binding protein Mextli homolog from Caenorhabditis elegans.